We begin with the raw amino-acid sequence, 126 residues long: Phosphoribosyl-AMP cyclohydrolase (126 aa).

D74 contacts Mg(2+). C75 provides a ligand contact to Zn(2+). 2 residues coordinate Mg(2+): D76 and D78. Zn(2+) contacts are provided by C92 and C99.

Belongs to the PRA-CH family. Homodimer. Mg(2+) is required as a cofactor. Requires Zn(2+) as cofactor.

It is found in the cytoplasm. The catalysed reaction is 1-(5-phospho-beta-D-ribosyl)-5'-AMP + H2O = 1-(5-phospho-beta-D-ribosyl)-5-[(5-phospho-beta-D-ribosylamino)methylideneamino]imidazole-4-carboxamide. Its pathway is amino-acid biosynthesis; L-histidine biosynthesis; L-histidine from 5-phospho-alpha-D-ribose 1-diphosphate: step 3/9. In terms of biological role, catalyzes the hydrolysis of the adenine ring of phosphoribosyl-AMP. The protein is Phosphoribosyl-AMP cyclohydrolase of Geotalea daltonii (strain DSM 22248 / JCM 15807 / FRC-32) (Geobacter daltonii).